An 83-amino-acid polypeptide reads, in one-letter code: Mu-theraphotoxin-Hhn2g (83 aa).

Residues 1–21 (MKASMYLALAGLVLLFVVGYA) form the signal peptide. Positions 22–48 (SESEEKEFPRELLSKIFAVDDFKGEER) are excised as a propeptide. Cystine bridges form between Cys-50-Cys-65 and Cys-57-Cys-70. Leu-81 is subject to Leucine amide.

Belongs to the neurotoxin 10 (Hwtx-1) family. 15 (Hntx-3) subfamily. Monomer. As to expression, expressed by the venom gland.

The protein resides in the secreted. In terms of biological role, lethal neurotoxin. Selectively blocks tetrodotoxin-sensitive voltage-gated sodium channels (Nav). Does not affect tetrodotoxin-resistant voltage-gated sodium channels or calcium channels. This chain is Mu-theraphotoxin-Hhn2g, found in Cyriopagopus hainanus (Chinese bird spider).